Reading from the N-terminus, the 348-residue chain is Protein RecA (348 aa).

66–73 (GPESSGKT) is a binding site for ATP.

The protein belongs to the RecA family.

It is found in the cytoplasm. Functionally, can catalyze the hydrolysis of ATP in the presence of single-stranded DNA, the ATP-dependent uptake of single-stranded DNA by duplex DNA, and the ATP-dependent hybridization of homologous single-stranded DNAs. It interacts with LexA causing its activation and leading to its autocatalytic cleavage. The chain is Protein RecA from Legionella pneumophila.